A 159-amino-acid chain; its full sequence is 2-C-methyl-D-erythritol 2,4-cyclodiphosphate synthase (159 aa).

A divalent metal cation is bound by residues Asp10 and His12. 4-CDP-2-C-methyl-D-erythritol 2-phosphate is bound by residues 10–12 (DVH) and 36–37 (HS). His44 contacts a divalent metal cation. 4-CDP-2-C-methyl-D-erythritol 2-phosphate is bound by residues 58 to 60 (DIG), 63 to 67 (FPDTD), 102 to 108 (AQAPKMA), 134 to 137 (TTTE), Phe141, 141 to 144 (FTGR), and Arg144.

It belongs to the IspF family. In terms of assembly, homotrimer. The cofactor is a divalent metal cation.

The catalysed reaction is 4-CDP-2-C-methyl-D-erythritol 2-phosphate = 2-C-methyl-D-erythritol 2,4-cyclic diphosphate + CMP. It participates in isoprenoid biosynthesis; isopentenyl diphosphate biosynthesis via DXP pathway; isopentenyl diphosphate from 1-deoxy-D-xylulose 5-phosphate: step 4/6. Its function is as follows. Involved in the biosynthesis of isopentenyl diphosphate (IPP) and dimethylallyl diphosphate (DMAPP), two major building blocks of isoprenoid compounds. Catalyzes the conversion of 4-diphosphocytidyl-2-C-methyl-D-erythritol 2-phosphate (CDP-ME2P) to 2-C-methyl-D-erythritol 2,4-cyclodiphosphate (ME-CPP) with a corresponding release of cytidine 5-monophosphate (CMP). The chain is 2-C-methyl-D-erythritol 2,4-cyclodiphosphate synthase from Shewanella oneidensis (strain ATCC 700550 / JCM 31522 / CIP 106686 / LMG 19005 / NCIMB 14063 / MR-1).